A 694-amino-acid chain; its full sequence is Protein NPGR1 (694 aa).

Residues 12–40 (FEDQPGSPESLATRDFSASGLSSRNGGGD) are disordered. 9 TPR repeats span residues 32 to 65 (LSSRNGGGDWDSKLEDIQVDEAESTLKEALSLNY), 66 to 101 (EEARALLGRLEYQRGNFDAALQVFKGIDIKVLTPRI), 135 to 168 (LEAILLKARSLEELGSYKEAAEECKIILDVVENA), 188 to 221 (QKALELLPLLWKKAGNHHETIASYRRALSRPWNL), 307 to 340 (GERWYLLSLCYSAAGIDKAAINLLKMALGPSESR), 551 to 584 (TEAWQDLASVYGKLGSWSDAETCLEKARSMCYYS), 585 to 618 (PRGWNETGLCLEAKSLHEEALISFFLSLSIEPDH), 620 to 654 (PSIVSIAEVMMKSGDESLPTAKSFLMNALRLDPRN), and 655 to 688 (HDAWMKLGHVAKKQGLSQQAAEFYQAAYELELSA).

Interacts with calmodulin in a calcium-dependent manner. As to expression, expressed in pollen, flowers, fruits and leaves.

This is Protein NPGR1 from Arabidopsis thaliana (Mouse-ear cress).